The following is a 185-amino-acid chain: Ribosome-recycling factor (185 aa).

The protein belongs to the RRF family.

Its subcellular location is the cytoplasm. Functionally, responsible for the release of ribosomes from messenger RNA at the termination of protein biosynthesis. May increase the efficiency of translation by recycling ribosomes from one round of translation to another. In Vibrio parahaemolyticus serotype O3:K6 (strain RIMD 2210633), this protein is Ribosome-recycling factor.